The primary structure comprises 128 residues: Aspartate 1-decarboxylase (128 aa).

S25 acts as the Schiff-base intermediate with substrate; via pyruvic acid in catalysis. At S25 the chain carries Pyruvic acid (Ser). Residue T57 coordinates substrate. The Proton donor role is filled by Y58. Substrate is bound at residue 73-75; the sequence is GSA.

This sequence belongs to the PanD family. As to quaternary structure, heterooctamer of four alpha and four beta subunits. Pyruvate is required as a cofactor. Post-translationally, is synthesized initially as an inactive proenzyme, which is activated by self-cleavage at a specific serine bond to produce a beta-subunit with a hydroxyl group at its C-terminus and an alpha-subunit with a pyruvoyl group at its N-terminus.

It localises to the cytoplasm. The catalysed reaction is L-aspartate + H(+) = beta-alanine + CO2. It participates in cofactor biosynthesis; (R)-pantothenate biosynthesis; beta-alanine from L-aspartate: step 1/1. Functionally, catalyzes the pyruvoyl-dependent decarboxylation of aspartate to produce beta-alanine. This is Aspartate 1-decarboxylase from Burkholderia mallei (strain NCTC 10247).